The sequence spans 534 residues: MARGLQVPLPRLATGLLLLLSVQPWAESGKVLVVPTDGSPWLSMREALRELHARGHQAVVLTPEVNMHIKEEKFFTLTAYAVPWTQKEFDRVTLGYTQGFFETEHLLKRYSRSMAIMNNVSLALHRCCVELLHNEALIRHLNATSFDVVLTDPVNLCGAVLAKYLSIPAVFFWRYIPCDLDFKGTQCPNPSSYIPKLLTTNSDHMTFLQRVKNMLYPLALSYICHTFSAPYASLASELFQREVSVVDLVSYASVWLFRGDFVMDYPRPIMPNMVFIGGINCANGKPLSQEFEAYINASGEHGIVVFSLGSMVSEIPEKKAMAIADALGKIPQTVLWRYTGTRPSNLANNTILVKWLPQNDLLGHPMTRAFITHAGSHGVYESICNGVPMVMMPLFGDQMDNAKRMETKGAGVTLNVLEMTSEDLENALKAVINDKSYKENIMRLSSLHKDRPVEPLDLAVFWVEFVMRHKGAPHLRPAAHDLTWYQYHSLDVIGFLLAVVLTVAFITFKCCAYGYRKCLGKKGRVKKAHKSKTH.

The signal sequence occupies residues 1-28; sequence MARGLQVPLPRLATGLLLLLSVQPWAES. N-linked (GlcNAc...) asparagine glycans are attached at residues Asn119, Asn142, Asn296, and Asn348. Residues 492-508 traverse the membrane as a helical segment; sequence VIGFLLAVVLTVAFITF.

It belongs to the UDP-glycosyltransferase family. Homodimer. Homooligomer. Interacts with UGT1A1, UGT1A3, UGT1A6, UGT1A7, UGT1A8, UGT1A9 and UGT1A10 to form heterodimers. Isoform 1 interacts with isoform 2/i2 suggesting that oligomerization is involved in negative regulation of transferase activity by isoform 2. Isoform 1 also interacts with respective i2 isoforms of UGT1A1, UGT1A3, UGT1A6, UGT1A7, UGT1A8, UGT1A9 and UGT1A10. Expressed in liver. Expressed in kidney, colon and small intestine. Not expressed in esophagus. Not expressed in skin. In terms of tissue distribution, expressed in liver, kidney, colon, esophagus and small intestine.

The protein resides in the endoplasmic reticulum membrane. The catalysed reaction is glucuronate acceptor + UDP-alpha-D-glucuronate = acceptor beta-D-glucuronoside + UDP + H(+). It catalyses the reaction calcidiol + UDP-alpha-D-glucuronate = calcidiol 25-O-(beta-D-glucuronide) + UDP + H(+). The enzyme catalyses calcidiol + UDP-alpha-D-glucuronate = calcidiol 3-O-(beta-D-glucuronide) + UDP + H(+). It carries out the reaction calcitriol + UDP-alpha-D-glucuronate = calcitriol 25-O-(beta-D-glucuronide) + UDP + H(+). The catalysed reaction is (5Z,8Z,11Z,14Z)-eicosatetraenoate + UDP-alpha-D-glucuronate = O-[(5Z),(8Z),(11Z),(14Z)-eicosatetraenoyl]-beta-D-glucuronate + UDP. It catalyses the reaction 15-hydroxy-(5Z,8Z,11Z,13E)-eicosatetraenoate + UDP-alpha-D-glucuronate = 15-O-(beta-D-glucuronosyl)-(5Z,8Z,11Z,14Z)-eicosatetraenoate + UDP + H(+). The enzyme catalyses 20-hydroxy-(5Z,8Z,11Z,14Z)-eicosatetraenoate + UDP-alpha-D-glucuronate = 20-O-(beta-D-glucuronosyl)-(5Z,8Z,11Z,14Z)-eicosatetraenoate + UDP + H(+). In terms of biological role, UDP-glucuronosyltransferase (UGT) that catalyzes phase II biotransformation reactions in which lipophilic substrates are conjugated with glucuronic acid to increase the metabolite's water solubility, thereby facilitating excretion into either the urine or bile. Essential for the elimination and detoxification of drugs, xenobiotics and endogenous compounds. Involved in the glucuronidation of calcidiol, which is the major circulating form of vitamin D3 essential for the regulation of calcium and phosphate homeostasis. Also glucuronidates the biologically active form of vitamin D3, calcitriol, probably leading to its biliary transport and intestinal reabsorption. Involved in the glucuronidation of arachidonic acid (AA) and AA-derived eicosanoids including 15-HETE, 20-HETE and PGB1. Lacks UDP-glucuronosyltransferase (UGT) activity but acts as a negative regulator of isoform 1. The protein is UDP-glucuronosyltransferase 1A4 of Homo sapiens (Human).